The sequence spans 386 residues: L-prolyl-[peptidyl-carrier protein] dehydrogenase (386 aa).

FAD-binding positions include 125–134 (NAATEPDAGS) and 158–160 (FIT). Glu244 functions as the Proton acceptor in the catalytic mechanism. FAD contacts are provided by residues Arg270, Gln281, 338–342 (QTFGG), and 367–369 (TND).

It belongs to the acyl-CoA dehydrogenase family. The cofactor is FAD.

The enzyme catalyses L-prolyl-[peptidyl-carrier protein] + 2 oxidized [electron-transfer flavoprotein] + H(+) = (1H-pyrrole-2-carbonyl)-[peptidyl-carrier protein] + 2 reduced [electron-transfer flavoprotein]. It functions in the pathway antibiotic biosynthesis; prodigiosin biosynthesis. Functionally, involved in the biosynthesis of 4-methoxy-2,2'-bipyrrole-5-carbaldehyde (MBC), one of the terminal products involved in the biosynthesis of the red antibiotic prodigiosin (Pig). Catalyzes the desaturation of the L-prolyl-[PigG] to yield 1H-pyrrole-2-carbonyl-[PigG]. This is L-prolyl-[peptidyl-carrier protein] dehydrogenase from Serratia sp. (strain ATCC 39006) (Prodigiosinella confusarubida).